We begin with the raw amino-acid sequence, 315 residues long: ATP synthase gamma chain (315 aa).

In terms of assembly, F-type ATPases have 2 components, CF(1) - the catalytic core - and CF(0) - the membrane proton channel. CF(1) has five subunits: alpha(3), beta(3), gamma(1), delta(1), epsilon(1). CF(0) has four main subunits: a(1), b(1), b'(1) and c(9-12).

It is found in the cellular thylakoid membrane. Its function is as follows. Produces ATP from ADP in the presence of a proton gradient across the membrane. The gamma chain is believed to be important in regulating ATPase activity and the flow of protons through the CF(0) complex. Functionally, the complex from the organism is particularly stable to disruption and remains functional after 6 hrs at 55 degrees Celsius. The protein is ATP synthase gamma chain of Thermosynechococcus vestitus (strain NIES-2133 / IAM M-273 / BP-1).